The chain runs to 102 residues: MNNVFEIINQARRKNKLKRELQDNQKKIRDNQKRVVLLENMLDYIDPSMTTAEVITIVQNMKGDYEDRVDDHIIKSAEISKSRRDISRKIRDLTEADKKANK.

The stretch at 7-34 (IINQARRKNKLKRELQDNQKKIRDNQKR) forms a coiled coil.

Belongs to the pole-localizer TmaR family.

It localises to the cytoplasm. Functionally, pole-localizer protein involved in the regulation of several cellular processes. This chain is Pole-localizer protein TmaR, found in Aliivibrio salmonicida (strain LFI1238) (Vibrio salmonicida (strain LFI1238)).